Reading from the N-terminus, the 468-residue chain is uncharacterized protein (468 aa).

The interval methionine 1–asparagine 22 is disordered. The RING-type zinc-finger motif lies at cysteine 85 to arginine 123. Residues aspartate 386–histidine 402 show a composition bias toward low complexity. The disordered stretch occupies residues aspartate 386–serine 468. Positions isoleucine 417–arginine 434 are enriched in polar residues.

It localises to the nucleus. This is an uncharacterized protein from Schizosaccharomyces pombe (strain 972 / ATCC 24843) (Fission yeast).